The following is a 243-amino-acid chain: Complement C1q tumor necrosis factor-related protein 5 (243 aa).

Positions 1–15 are cleaved as a signal peptide; sequence MRPLLALLLLGLASG. Residues 15–124 form a disordered region; it reads GSPPLDDNKI…VPPPADTPLP (110 aa). Residues 30–95 enclose the Collagen-like domain; it reads GQPGLPGTPG…AGPVGAIGPA (66 aa). The C1q domain maps to 99–238; the sequence is SVPPRSAFSA…GFLVYSDWHS (140 aa).

Homotrimer (via collagen-like domain). May form higher order oligomers by supercoiling of the trimers. May interact with ERFE.

Its subcellular location is the secreted. In Rattus norvegicus (Rat), this protein is Complement C1q tumor necrosis factor-related protein 5 (C1qtnf5).